We begin with the raw amino-acid sequence, 156 residues long: Ribosomal RNA large subunit methyltransferase H (156 aa).

S-adenosyl-L-methionine contacts are provided by residues leucine 73, glycine 104, and 123–128 (LSDLTL).

Belongs to the RNA methyltransferase RlmH family. Homodimer.

It is found in the cytoplasm. It carries out the reaction pseudouridine(1915) in 23S rRNA + S-adenosyl-L-methionine = N(3)-methylpseudouridine(1915) in 23S rRNA + S-adenosyl-L-homocysteine + H(+). Its function is as follows. Specifically methylates the pseudouridine at position 1915 (m3Psi1915) in 23S rRNA. The chain is Ribosomal RNA large subunit methyltransferase H from Methylibium petroleiphilum (strain ATCC BAA-1232 / LMG 22953 / PM1).